Here is a 129-residue protein sequence, read N- to C-terminus: Small ribosomal subunit protein uS11 (129 aa).

It belongs to the universal ribosomal protein uS11 family. As to quaternary structure, part of the 30S ribosomal subunit. Interacts with proteins S7 and S18. Binds to IF-3.

Functionally, located on the platform of the 30S subunit, it bridges several disparate RNA helices of the 16S rRNA. Forms part of the Shine-Dalgarno cleft in the 70S ribosome. In Pseudomonas putida (strain GB-1), this protein is Small ribosomal subunit protein uS11.